A 272-amino-acid chain; its full sequence is Urease accessory protein UreD (272 aa).

This sequence belongs to the UreD family. In terms of assembly, ureD, UreF and UreG form a complex that acts as a GTP-hydrolysis-dependent molecular chaperone, activating the urease apoprotein by helping to assemble the nickel containing metallocenter of UreC. The UreE protein probably delivers the nickel.

It localises to the cytoplasm. Required for maturation of urease via the functional incorporation of the urease nickel metallocenter. This is Urease accessory protein UreD from Opitutus terrae (strain DSM 11246 / JCM 15787 / PB90-1).